A 308-amino-acid polypeptide reads, in one-letter code: Ribosomal RNA small subunit methyltransferase H (308 aa).

Residues 34 to 36, D54, F80, D101, and Q108 each bind S-adenosyl-L-methionine; that span reads GGH.

The protein belongs to the methyltransferase superfamily. RsmH family.

It localises to the cytoplasm. The catalysed reaction is cytidine(1402) in 16S rRNA + S-adenosyl-L-methionine = N(4)-methylcytidine(1402) in 16S rRNA + S-adenosyl-L-homocysteine + H(+). Functionally, specifically methylates the N4 position of cytidine in position 1402 (C1402) of 16S rRNA. The sequence is that of Ribosomal RNA small subunit methyltransferase H from Ureaplasma parvum serovar 3 (strain ATCC 27815 / 27 / NCTC 11736).